Reading from the N-terminus, the 315-residue chain is DNA-directed RNA polymerase subunit alpha (315 aa).

The interval 1-228 (MLEIEKPKIE…EHFKLFMTLT (228 aa)) is alpha N-terminal domain (alpha-NTD). The tract at residues 245 to 315 (KEKVLEMTIE…LGLSLKLNDE (71 aa)) is alpha C-terminal domain (alpha-CTD).

This sequence belongs to the RNA polymerase alpha chain family. In terms of assembly, homodimer. The RNAP catalytic core consists of 2 alpha, 1 beta, 1 beta' and 1 omega subunit. When a sigma factor is associated with the core the holoenzyme is formed, which can initiate transcription.

The catalysed reaction is RNA(n) + a ribonucleoside 5'-triphosphate = RNA(n+1) + diphosphate. Functionally, DNA-dependent RNA polymerase catalyzes the transcription of DNA into RNA using the four ribonucleoside triphosphates as substrates. The polypeptide is DNA-directed RNA polymerase subunit alpha (Clostridium acetobutylicum (strain ATCC 824 / DSM 792 / JCM 1419 / IAM 19013 / LMG 5710 / NBRC 13948 / NRRL B-527 / VKM B-1787 / 2291 / W)).